Consider the following 503-residue polypeptide: ATP synthase subunit alpha (503 aa).

169–176 contributes to the ATP binding site; it reads GDRKTGKT.

It belongs to the ATPase alpha/beta chains family. In terms of assembly, F-type ATPases have 2 components, CF(1) - the catalytic core - and CF(0) - the membrane proton channel. CF(1) has five subunits: alpha(3), beta(3), gamma(1), delta(1), epsilon(1). CF(0) has three main subunits: a(1), b(2) and c(9-12). The alpha and beta chains form an alternating ring which encloses part of the gamma chain. CF(1) is attached to CF(0) by a central stalk formed by the gamma and epsilon chains, while a peripheral stalk is formed by the delta and b chains.

It is found in the cell membrane. The enzyme catalyses ATP + H2O + 4 H(+)(in) = ADP + phosphate + 5 H(+)(out). Produces ATP from ADP in the presence of a proton gradient across the membrane. The alpha chain is a regulatory subunit. The polypeptide is ATP synthase subunit alpha (Lactobacillus delbrueckii subsp. bulgaricus (strain ATCC 11842 / DSM 20081 / BCRC 10696 / JCM 1002 / NBRC 13953 / NCIMB 11778 / NCTC 12712 / WDCM 00102 / Lb 14)).